Reading from the N-terminus, the 354-residue chain is Stimulator of interferon genes protein 3 (354 aa).

Transmembrane regions (helical) follow at residues 20–40 (VTFA…FALW), 48–68 (INFV…GELI), 101–121 (YGSC…YALL), and 132–152 (YGIF…IVGI). Positions 178, 183, 250, 251, 253, 272, 275, and 276 each coordinate 3',3'-cGAMP.

The protein belongs to the STING family.

The protein localises to the membrane. Functionally, facilitator of innate immune signaling that acts as a sensor of second messenger signals produced by cyclic GMP-AMP synthase-like receptors (cGLRs) and promotes the production of type I interferon. Innate immune response is triggered in response to nucleotides from viruses and bacteria delivered to the cytoplasm. Acts by binding cyclic dinucleotides: recognizes and binds cyclic 3'-3' linked cGAMP (3'-3'-cGAMP), cyclic di-AMP (3',3'-c-di-AMP) and cyclic di-GMP (3',3'-c-di-GMP) second messengers produced by cGLRs in response to nucleotides in the cytosol, such as double-stranded RNA (dsRNA). Upon binding to 3'-3'-cGAMP, 3',3'-c-di-AMP or 3',3'-c-di-GMP, oligomerizes and promotes the recruitment and subsequent activation of the transcription factor IRF3 to induce expression of type I interferon. The protein is Stimulator of interferon genes protein 3 of Stylophora pistillata (Smooth cauliflower coral).